We begin with the raw amino-acid sequence, 517 residues long: Ovoinhibitor (517 aa).

Kazal-like domains lie at 67 to 132, 133 to 197, 198 to 263, 264 to 329, 330 to 394, 395 to 460, and 461 to 517; these read FGIE…ECRP, KHVT…ECKL, EIGS…KCRQ, EIPE…RCKE, RSTP…RCRE, EVPE…RCEE, and DITK…MAAC. A glycan (N-linked (GlcNAc...) asparagine) is linked at asparagine 72. 21 disulfides stabilise this stretch: cysteine 73-cysteine 112, cysteine 90-cysteine 109, cysteine 98-cysteine 130, cysteine 139-cysteine 177, cysteine 155-cysteine 174, cysteine 163-cysteine 195, cysteine 204-cysteine 243, cysteine 221-cysteine 240, cysteine 229-cysteine 261, cysteine 270-cysteine 309, cysteine 287-cysteine 306, cysteine 295-cysteine 327, cysteine 336-cysteine 374, cysteine 352-cysteine 371, cysteine 360-cysteine 392, cysteine 401-cysteine 440, cysteine 418-cysteine 437, cysteine 426-cysteine 458, cysteine 467-cysteine 499, cysteine 477-cysteine 496, and cysteine 485-cysteine 517. An N-linked (GlcNAc...) asparagine glycan is attached at asparagine 186. A glycan (N-linked (GlcNAc...) asparagine) is linked at asparagine 506.

Post-translationally, glycosylated. As to expression, expressed in oviduct (at protein level). Expressed in egg white (at protein level). Expressed in egg yolk plasma of non-fertilized eggs (at protein level). Expressed in the magnum of the oviduct (at protein level). Expressed in oviduct. Expressed in liver. Expressed in the cortico-medullary border region of the bursa of Fabricius by the bursal secretory dendritic-like cells. Highly expressed in the magnum of the oviduct, and at a lower level in uterus. Weakly expressed in white isthmus and very weakly in infundibulum. Not expressed in duodenum and kidney.

The protein localises to the secreted. Serine protease inhibitor involved in antimicrobial egg defense preventing contamination of table eggs (non-fertilized eggs) and protecting the chick embryo (fertilized eggs). Inhibits trypsin, chymotrypsin, elastase, subtilisin and a proteinase of fungus Aspergillus oryzae. Inhibits calcium-activated potassium channels KCNMA1 (bovine) and slo (Drosophila). Has antibacterial activity against B.thuringiensis LMSA 3.06.004, but not against S.aureus CIP 103 811, P.aeruginosa PAO1, B.cereus ATCC6464 or B.subtilis ATCC 6633. This chain is Ovoinhibitor, found in Gallus gallus (Chicken).